The primary structure comprises 332 residues: MNWLQLADEVIAGKVISDDEALAILNSDDDDILKLMDGAFAIRKHYYGKKVKLNMIMNAKSGYCPEDCGYCSQSSKSTAPIEKYPFITKEEILAGAKRAFENKIGTYCIVASGRGPTRKDVNVVSEAVEEIKAKYGLKVCACLGLLKEEQAQQLKEAGVDRYNHNLNTSERHHSYITTTHTYEDRVNTVEVVKKHGISPCSGAIIGMKETKMDVVEIARALHQLDADSIPVNFLHAIDGTKLEGTQDLNPRYCLKVLALFRYMNPSKEIRISGGREVNLGFLQPFGLYAANSIFVGDYLTTEGQEANSDYRMLEDLGFEIELTQKQEEAFCS.

One can recognise a Radical SAM core domain in the interval 46–275; the sequence is YYGKKVKLNM…SKEIRISGGR (230 aa). Positions 64, 68, and 71 each coordinate [4Fe-4S] cluster. The [2Fe-2S] cluster site is built by Cys108, Cys140, Cys200, and Arg270.

It belongs to the radical SAM superfamily. Biotin synthase family. In terms of assembly, homodimer. The cofactor is [4Fe-4S] cluster. Requires [2Fe-2S] cluster as cofactor.

The catalysed reaction is (4R,5S)-dethiobiotin + (sulfur carrier)-SH + 2 reduced [2Fe-2S]-[ferredoxin] + 2 S-adenosyl-L-methionine = (sulfur carrier)-H + biotin + 2 5'-deoxyadenosine + 2 L-methionine + 2 oxidized [2Fe-2S]-[ferredoxin]. Its pathway is cofactor biosynthesis; biotin biosynthesis; biotin from 7,8-diaminononanoate: step 2/2. In terms of biological role, catalyzes the conversion of dethiobiotin (DTB) to biotin by the insertion of a sulfur atom into dethiobiotin via a radical-based mechanism. The chain is Biotin synthase from Lysinibacillus sphaericus (Bacillus sphaericus).